The chain runs to 199 residues: Peroxisomal membrane protein PEX17 (199 aa).

Its subcellular location is the peroxisome membrane. Functionally, component of the peroxisomal translocation machinery with PEX13 and PEX14. Interacts indirectly with the PTS1 receptor (PAS10/PEX5) and directly binds to PEX14. Required for import of both PTS1 and PTS2 proteins. The chain is Peroxisomal membrane protein PEX17 (PEX17) from Saccharomyces cerevisiae (strain ATCC 204508 / S288c) (Baker's yeast).